A 246-amino-acid chain; its full sequence is Ribonuclease PH (246 aa).

The segment at 67 to 87 (NMLPGSTSPRKRRDRSGKVDG) is disordered. Phosphate-binding positions include R88 and 126–128 (GTR).

The protein belongs to the RNase PH family. In terms of assembly, homohexameric ring arranged as a trimer of dimers.

It carries out the reaction tRNA(n+1) + phosphate = tRNA(n) + a ribonucleoside 5'-diphosphate. In terms of biological role, phosphorolytic 3'-5' exoribonuclease that plays an important role in tRNA 3'-end maturation. Removes nucleotide residues following the 3'-CCA terminus of tRNAs; can also add nucleotides to the ends of RNA molecules by using nucleoside diphosphates as substrates, but this may not be physiologically important. Probably plays a role in initiation of 16S rRNA degradation (leading to ribosome degradation) during starvation. The chain is Ribonuclease PH from Rhodopirellula baltica (strain DSM 10527 / NCIMB 13988 / SH1).